The sequence spans 160 residues: Putative UPF0479 protein YBL113W-A (160 aa).

2 helical membrane passes run 39–59 and 136–156; these read IVFCLPFFPALFFVPVQKVLQ and VPMIWLDVFQVFFVFLIISQH.

Belongs to the UPF0479 family.

The protein localises to the membrane. In Saccharomyces cerevisiae (strain ATCC 204508 / S288c) (Baker's yeast), this protein is Putative UPF0479 protein YBL113W-A.